Reading from the N-terminus, the 352-residue chain is Uricase (352 aa).

The interval 1 to 32 (MFATPLRQPAAANHQTPKNSAGMDEHGKPYQY) is disordered. Residues 23 to 32 (MDEHGKPYQY) show a composition bias toward basic and acidic residues. Active-site charge relay system residues include Lys41 and Thr86. The urate site is built by Thr86, Asp87, Phe214, Arg231, Val279, Gln280, and Asn306. The Charge relay system role is filled by His308. The short motif at 350–352 (SHL) is the Microbody targeting signal element.

This sequence belongs to the uricase family. In terms of tissue distribution, malpighian tubules.

The protein resides in the peroxisome. The catalysed reaction is urate + O2 + H2O = 5-hydroxyisourate + H2O2. The protein operates within purine metabolism; urate degradation; (S)-allantoin from urate: step 1/3. Its activity is regulated as follows. Repressed by 20-hydroxyecdysone. In terms of biological role, catalyzes the oxidation of uric acid to 5-hydroxyisourate, which is further processed to form (S)-allantoin. The chain is Uricase (Uro) from Drosophila melanogaster (Fruit fly).